Reading from the N-terminus, the 207-residue chain is Chloramphenicol acetyltransferase (207 aa).

Catalysis depends on histidine 186, which acts as the Proton acceptor.

This sequence belongs to the chloramphenicol acetyltransferase family. Homotrimer.

It catalyses the reaction chloramphenicol + acetyl-CoA = chloramphenicol 3-acetate + CoA. Its function is as follows. This enzyme is an effector of chloramphenicol resistance in bacteria. This is Chloramphenicol acetyltransferase (catP) from Clostridium perfringens.